The following is a 241-amino-acid chain: Large ribosomal subunit protein bL25 (241 aa).

The interval 214-241 (LDAVKAGEEGSRAQQETEEASERADQGQ) is disordered.

The protein belongs to the bacterial ribosomal protein bL25 family. CTC subfamily. Part of the 50S ribosomal subunit; part of the 5S rRNA/L5/L18/L25 subcomplex. Contacts the 5S rRNA. Binds to the 5S rRNA independently of L5 and L18.

In terms of biological role, this is one of the proteins that binds to the 5S RNA in the ribosome where it forms part of the central protuberance. This is Large ribosomal subunit protein bL25 from Deinococcus geothermalis (strain DSM 11300 / CIP 105573 / AG-3a).